The chain runs to 384 residues: F-box only protein 5 (384 aa).

The segment at 25–67 (EVKGHKVSPRKTGALSLRSPAATNVSTPLESRSKGPHNKENYQ) is disordered. Polar residues predominate over residues 45-54 (AATNVSTPLE). Positions 55–67 (SRSKGPHNKENYQ) are enriched in basic and acidic residues. In terms of domain architecture, F-box spans 187 to 234 (CKLMRKDMRHILARILGLLGDCDLISCTKVSRTWRKIICQDQLALQRW). Residues 311–359 (SLRRCSRCSSPARFDAVMQRAVCTRISCAFEFCTLCQSAFHDSTPCRNT) form a ZBR-type zinc finger. The Zn(2+) site is built by C315, C318, C333, C338, C343, C346, H351, and C356.

As to quaternary structure, part of a SCF (SKP1-cullin-F-box) protein ligase complex.

It is found in the nucleus. The protein localises to the cytoplasm. It participates in protein modification; protein ubiquitination. Functionally, during embryonic development, regulates the integrity of the genome and therefore the cell cycle progression by preventing rereplication through an APC-Cdh1-dependent mechanism. The chain is F-box only protein 5 from Danio rerio (Zebrafish).